The primary structure comprises 252 residues: NLP effector protein Pc118356 (252 aa).

Positions 1–17 (MALTVLAATALTALIMG) are cleaved as a signal peptide. 2 N-linked (GlcNAc...) asparagine glycosylation sites follow: asparagine 20 and asparagine 67. Positions 121-127 (QDRHFWE) match the Hepta-peptide GHRHDWE motif motif. Asparagine 166 carries N-linked (GlcNAc...) asparagine glycosylation.

It belongs to the Necrosis inducing protein (NPP1) family.

The protein localises to the secreted. Functionally, secreted effector that contributes strongly to virulence during infection by P.capsici. The sequence is that of NLP effector protein Pc118356 from Phytophthora capsici.